We begin with the raw amino-acid sequence, 354 residues long: tRNA dimethylallyltransferase (354 aa).

28 to 35 (GPTATGKS) provides a ligand contact to ATP. 30-35 (TATGKS) contacts substrate. Residues 53–56 (DSRQ) are interaction with substrate tRNA.

The protein belongs to the IPP transferase family. As to quaternary structure, monomer. It depends on Mg(2+) as a cofactor.

The enzyme catalyses adenosine(37) in tRNA + dimethylallyl diphosphate = N(6)-dimethylallyladenosine(37) in tRNA + diphosphate. Functionally, catalyzes the transfer of a dimethylallyl group onto the adenine at position 37 in tRNAs that read codons beginning with uridine, leading to the formation of N6-(dimethylallyl)adenosine (i(6)A). This is tRNA dimethylallyltransferase from Synechococcus sp. (strain JA-2-3B'a(2-13)) (Cyanobacteria bacterium Yellowstone B-Prime).